We begin with the raw amino-acid sequence, 92 residues long: UPF0298 protein ABC2380 (92 aa).

The protein belongs to the UPF0298 family.

The protein localises to the cytoplasm. The sequence is that of UPF0298 protein ABC2380 from Shouchella clausii (strain KSM-K16) (Alkalihalobacillus clausii).